Here is a 704-residue protein sequence, read N- to C-terminus: G-protein coupled receptor-associated protein LMBRD2B (704 aa).

The Extracellular segment spans residues 1 to 3; sequence MSG. The helical transmembrane segment at 4-21 threads the bilayer; it reads AALGIEIVVVFFLALFLL. Topologically, residues 22-33 are cytoplasmic; sequence HRYGDFKKQQRM. The helical transmembrane segment at 34–54 threads the bilayer; sequence VLFGTLLAWYLCFLIVFILPL. Residues 55-111 are Extracellular-facing; it reads DVSTTIYNQCLIDQEAQTQTPSVSPVLSEQTTANASISPAKSTQRVCYKPWSYIPDG. N-linked (GlcNAc...) asparagine glycosylation is present at Asn88. The chain crosses the membrane as a helical span at residues 112-132; sequence IMPVFWRVVYWTSQCLTWLLL. Topologically, residues 133-157 are cytoplasmic; the sequence is PFMQSYARSGGFTITGKIKTALIEN. A helical transmembrane segment spans residues 158 to 178; sequence AIYYGTYLFIFGSLLIYVAVH. Residues 179–192 are Extracellular-facing; the sequence is PQWHLSWYELQTIG. Residues 193 to 213 form a helical membrane-spanning segment; it reads ITAANTWGLFLLVLLLGYGLV. Residues 214-393 lie on the Cytoplasmic side of the membrane; that stretch reads DIPRSYWEAS…ECLLKQWFYR (180 aa). Residues 235-266 adopt a coiled-coil conformation; sequence KAAKLMTEKADSEENLEDVMEEVRKINESIKY. The helical transmembrane segment at 394–414 threads the bilayer; sequence VLAVVLALFSVAVVWSECTFF. Topologically, residues 415–438 are extracellular; that stretch reads STHPVLSLFAVFIQLAERDYNYLY. Residues 439–459 form a helical membrane-spanning segment; sequence IEMACFITIFFLCTCVYSTVF. At 460-481 the chain is on the cytoplasmic side; that stretch reads RIRVFNYYYLASHHQTDAYSLQ. Residues 482–502 traverse the membrane as a helical segment; the sequence is FSGMLFCRLTPPLCLNFLGLI. Over 503-527 the chain is Extracellular; sequence HMDSAISHQAKKQTAYTSIMGSMRV. A helical membrane pass occupies residues 528–548; the sequence is LSFIANGFYIYYPMLIVVLCI. The Cytoplasmic portion of the chain corresponds to 549-704; sequence ATYFSLGTRC…SSRNRIFDDV (156 aa). The stretch at 576–612 forms a coiled coil; the sequence is DLIDEGRELLRRERRKRQRIEDGENRRREWRERYAQR. 2 disordered regions span residues 613 to 654 and 672 to 704; these read DENA…QSGR and TLTD…FDDV. Positions 631-654 are enriched in polar residues; that stretch reads YGETLNANTNRQAKYTRSGSQSGR.

It belongs to the LIMR family.

It is found in the cell membrane. May associate with G-protein coupled receptors and regulate downstream signaling pathways. The polypeptide is G-protein coupled receptor-associated protein LMBRD2B (lmbrd2b) (Danio rerio (Zebrafish)).